We begin with the raw amino-acid sequence, 513 residues long: Putative fucosyltransferase-like protein (513 aa).

A disordered region spans residues 1–34; that stretch reads MGVFSNLRGPRAGATHDEFPATNGSPSSSSSPSS. At 1–39 the chain is on the cytoplasmic side; that stretch reads MGVFSNLRGPRAGATHDEFPATNGSPSSSSSPSSSIKRK. Low complexity predominate over residues 25 to 34; that stretch reads SPSSSSSPSS. The chain crosses the membrane as a helical; Signal-anchor for type II membrane protein span at residues 40–60; sequence LSNLLPLCVALVVIAEIGFLG. The Lumenal segment spans residues 61-513; that stretch reads RLDKVALVDT…PCAKFEVVFV (453 aa). N-linked (GlcNAc...) asparagine glycans are attached at residues asparagine 348 and asparagine 493.

This sequence belongs to the glycosyltransferase 10 family.

Its subcellular location is the golgi apparatus. It is found in the golgi stack membrane. The protein operates within protein modification; protein glycosylation. May be involved in cell wall biosynthesis. May act as a fucosyltransferase. In Arabidopsis thaliana (Mouse-ear cress), this protein is Putative fucosyltransferase-like protein (FUT12).